The chain runs to 331 residues: DNA fragmentation factor subunit alpha (331 aa).

Met1 carries the post-translational modification N-acetylmethionine. In terms of domain architecture, CIDE-N spans 17–96 (PLKPCLLRRN…ALACNEKWIY (80 aa)). Residue Thr243 is modified to Phosphothreonine. Residues 306-331 (LRNLSARRSPLPGEPQRPKRAKRDSS) are disordered.

In terms of assembly, heterodimer of DFFA and DFFB. In terms of processing, caspase-3 cleaves DFF45 at 2 sites to generate an active factor.

The protein resides in the cytoplasm. In terms of biological role, inhibitor of the caspase-activated DNase (DFF40). This is DNA fragmentation factor subunit alpha (Dffa) from Mus musculus (Mouse).